A 617-amino-acid polypeptide reads, in one-letter code: Chaperone protein HscA homolog (617 aa).

The protein belongs to the heat shock protein 70 family.

Functionally, probable chaperone. Has a low intrinsic ATPase activity which is markedly stimulated by HscB. The polypeptide is Chaperone protein HscA homolog (Vibrio vulnificus (strain CMCP6)).